We begin with the raw amino-acid sequence, 686 residues long: Aminodeoxychorismate synthase (686 aa).

Residues arginine 2–alanine 194 form the Glutamine amidotransferase type-1 domain. Cysteine 81 functions as the Nucleophile in the catalytic mechanism. Active-site residues include histidine 168 and glutamate 170. Positions leucine 233–arginine 686 are PABB component.

In the C-terminal section; belongs to the anthranilate synthase component I family.

It catalyses the reaction chorismate + L-glutamine = 4-amino-4-deoxychorismate + L-glutamate. It participates in antibiotic biosynthesis. In terms of biological role, involved in chloramphenicol biosynthesis. Catalyzes the biosynthesis of 4-amino-4-deoxychorismate (ADC) from chorismate and glutamine. This chain is Aminodeoxychorismate synthase, found in Streptomyces venezuelae (strain ATCC 10712 / CBS 650.69 / DSM 40230 / JCM 4526 / NBRC 13096 / PD 04745).